The sequence spans 471 residues: 5-hydroxytryptamine receptor 2A (471 aa).

Residues 1–80 are Extracellular-facing; it reads MDILCEENTS…LQEKNWSALL (80 aa). Asn-8, Asn-38, Asn-44, Asn-51, and Asn-54 each carry an N-linked (GlcNAc...) asparagine glycan. A helical membrane pass occupies residues 81–97; it reads TAVVIILTIAGNILVIM. The Cytoplasmic segment spans residues 98-111; it reads AVSLEKKLQNATNY. The helical transmembrane segment at 112-137 threads the bilayer; that stretch reads FLMSLAIADMLLGFLVMPVSMLTILY. At 138–146 the chain is on the extracellular side; that stretch reads GYRWPLPSK. The chain crosses the membrane as a helical span at residues 147-171; it reads LCAVWIYLDVLFSTASIMHLCAISL. A disulfide bridge links Cys-148 with Cys-227. A serotonin-binding site is contributed by Asp-155. A DRY motif; important for ligand-induced conformation changes motif is present at residues 172 to 174; sequence DRY. Over 172–191 the chain is Cytoplasmic; it reads DRYVAIQNPIHHSRFNSRTK. The chain crosses the membrane as a helical span at residues 192-215; sequence AFLKIIAVWTISVGISMPIPVFGL. Residues 216-232 are Extracellular-facing; that stretch reads QDDSKVFKEGSCLLADD. A helical membrane pass occupies residues 233–258; it reads NFVLIGSFVSFFIPLTIMVITYFLTI. Over 259–322 the chain is Cytoplasmic; sequence KSLQKEATLC…QSISNEQKAC (64 aa). Ser-280 bears the Phosphoserine mark. The helical transmembrane segment at 323–348 threads the bilayer; sequence KVLGIVFFLFVVMWCPFFITNIMAVI. Asn-343 is a binding site for serotonin. Cys-349 and Cys-353 are oxidised to a cystine. Residues 349–356 lie on the Extracellular side of the membrane; the sequence is CKESCNED. A helical membrane pass occupies residues 357 to 382; it reads VIGALLNVFVWIGYLSSAVNPLVYTL. An NPxxY motif; important for ligand-induced conformation changes and signaling motif is present at residues 376–380; that stretch reads NPLVY. The Cytoplasmic segment spans residues 383–471; the sequence is FNKTYRSAFS…DGVNEKVSCV (89 aa). The interval 450 to 471 is disordered; it reads KQHSEDASKDNSDGVNEKVSCV. A compositionally biased stretch (basic and acidic residues) spans 451–465; sequence QHSEDASKDNSDGVN. The PDZ-binding signature appears at 469–471; the sequence is SCV.

This sequence belongs to the G-protein coupled receptor 1 family. Interacts (via C-terminus) with MPDZ and PATJ. May interact (via C-terminus) with MPP3, PRDX6, DLG4, DLG1, CASK, APBA1 and MAGI2. Interacts with GRM2 and DRD2; this may affect signaling.

Its subcellular location is the cell membrane. The protein resides in the cell projection. It localises to the dendrite. The protein localises to the axon. It is found in the cytoplasmic vesicle. Its subcellular location is the membrane. The protein resides in the caveola. It localises to the presynapse. G-protein coupled receptor activity is regulated by lipids: oleamide increases HTR2A-mediated activity. Functionally, G-protein coupled receptor for 5-hydroxytryptamine (serotonin). Also functions as a receptor for various drugs and psychoactive substances, including mescaline, psilocybin, 1-(2,5-dimethoxy-4-iodophenyl)-2-aminopropane (DOI) and lysergic acid diethylamide (LSD). Ligand binding causes a conformation change that triggers signaling via guanine nucleotide-binding proteins (G proteins) and modulates the activity of downstream effectors. HTR2A is coupled to G(q)/G(11) G alpha proteins and activates phospholipase C-beta, releasing diacylglycerol (DAG) and inositol 1,4,5-trisphosphate (IP3) second messengers that modulate the activity of phosphatidylinositol 3-kinase and promote the release of Ca(2+) ions from intracellular stores, respectively. Beta-arrestin family members inhibit signaling via G proteins and mediate activation of alternative signaling pathways. Affects neural activity, perception, cognition and mood. Plays a role in the regulation of behavior, including responses to anxiogenic situations and psychoactive substances. Plays a role in intestinal smooth muscle contraction, and may play a role in arterial vasoconstriction. The chain is 5-hydroxytryptamine receptor 2A (HTR2A) from Macaca mulatta (Rhesus macaque).